The sequence spans 258 residues: tRNA pseudouridine synthase A (258 aa).

The active-site Nucleophile is the Asp-52. Residue Tyr-110 participates in substrate binding.

It belongs to the tRNA pseudouridine synthase TruA family. Homodimer.

It catalyses the reaction uridine(38/39/40) in tRNA = pseudouridine(38/39/40) in tRNA. Functionally, formation of pseudouridine at positions 38, 39 and 40 in the anticodon stem and loop of transfer RNAs. The sequence is that of tRNA pseudouridine synthase A from Francisella tularensis subsp. tularensis (strain FSC 198).